A 286-amino-acid chain; its full sequence is 2-dehydro-3-deoxyphosphooctonate aldolase (286 aa).

It belongs to the KdsA family.

It is found in the cytoplasm. The enzyme catalyses D-arabinose 5-phosphate + phosphoenolpyruvate + H2O = 3-deoxy-alpha-D-manno-2-octulosonate-8-phosphate + phosphate. The protein operates within carbohydrate biosynthesis; 3-deoxy-D-manno-octulosonate biosynthesis; 3-deoxy-D-manno-octulosonate from D-ribulose 5-phosphate: step 2/3. Its pathway is bacterial outer membrane biogenesis; lipopolysaccharide biosynthesis. The chain is 2-dehydro-3-deoxyphosphooctonate aldolase from Shewanella denitrificans (strain OS217 / ATCC BAA-1090 / DSM 15013).